An 89-amino-acid polypeptide reads, in one-letter code: UPF0367 protein CYA_1023 (89 aa).

Residues 69 to 89 (TKSGGPGAPGTRPGFLAQLQG) are disordered.

The protein belongs to the UPF0367 family.

The protein is UPF0367 protein CYA_1023 of Synechococcus sp. (strain JA-3-3Ab) (Cyanobacteria bacterium Yellowstone A-Prime).